The chain runs to 139 residues: uncharacterized protein (139 aa).

The segment at 1 to 26 (MQLVREKRGAHQHVPRKTTEPQKVRG) is disordered. Positions 17–26 (KTTEPQKVRG) are enriched in basic and acidic residues.

This is an uncharacterized protein from Ictalurid herpesvirus 1 (strain Auburn) (IcHV-1).